The primary structure comprises 411 residues: Citrate synthase (411 aa).

Catalysis depends on residues His304 and Asp363.

Belongs to the citrate synthase family.

The catalysed reaction is oxaloacetate + acetyl-CoA + H2O = citrate + CoA + H(+). The protein operates within carbohydrate metabolism; tricarboxylic acid cycle; isocitrate from oxaloacetate: step 1/2. The sequence is that of Citrate synthase (gltA) from Rickettsia australis.